A 454-amino-acid polypeptide reads, in one-letter code: Glutaredoxin domain-containing cysteine-rich protein CG31559 (454 aa).

Disordered stretches follow at residues 30-88 and 217-239; these read ETAD…QRQK and RSAR…GSDS. Positions 33–45 are enriched in polar residues; sequence DSGNGSDLESTGL. Over residues 58–69 the composition is skewed to low complexity; it reads SSLGSDSMHGSS. Polar residues predominate over residues 70 to 84; sequence TEYVRQSASQPSGQR. Positions 217 to 227 are enriched in basic and acidic residues; it reads RSARSGDEADH. Residues 295 to 400 form the Glutaredoxin domain; that stretch reads NAKNFKEKDL…QLLKPYKSMA (106 aa).

Belongs to the GRXCR1 family.

This Drosophila melanogaster (Fruit fly) protein is Glutaredoxin domain-containing cysteine-rich protein CG31559.